Reading from the N-terminus, the 603-residue chain is ATP-dependent zinc metalloprotease FtsH (603 aa).

Topologically, residues 1–2 (MK) are stromal. A helical transmembrane segment spans residues 3–23 (NLWIWSLPLIVLAFIGWQELA). Residues 24–101 (NQMPVATSRM…DVDVHAVSNW (78 aa)) are Lumenal-facing. The helical transmembrane segment at 102-122 (INVASNWIIPLIIIGVVIWLL) threads the bilayer. Topologically, residues 123–603 (SRSASSNTTG…SQAARLTAVN (481 aa)) are stromal. 194–201 (GPPGTGKT) lines the ATP pocket. Residue H415 participates in Zn(2+) binding. E416 is an active-site residue. Residues H419 and D493 each contribute to the Zn(2+) site.

The protein in the central section; belongs to the AAA ATPase family. This sequence in the C-terminal section; belongs to the peptidase M41 family. Homohexamer. It depends on Zn(2+) as a cofactor.

Its subcellular location is the plastid. It is found in the chloroplast thylakoid membrane. Acts as a processive, ATP-dependent zinc metallopeptidase. The chain is ATP-dependent zinc metalloprotease FtsH from Cyanidioschyzon merolae (strain NIES-3377 / 10D) (Unicellular red alga).